We begin with the raw amino-acid sequence, 178 residues long: Ribosomal RNA small subunit methyltransferase G (178 aa).

S-adenosyl-L-methionine contacts are provided by residues G54, L59, 105–106, and R120; that span reads LE.

This sequence belongs to the methyltransferase superfamily. RNA methyltransferase RsmG family.

The protein resides in the cytoplasm. The enzyme catalyses guanosine(527) in 16S rRNA + S-adenosyl-L-methionine = N(7)-methylguanosine(527) in 16S rRNA + S-adenosyl-L-homocysteine. Functionally, specifically methylates the N7 position of guanine in position 527 of 16S rRNA. In Helicobacter acinonychis (strain Sheeba), this protein is Ribosomal RNA small subunit methyltransferase G.